We begin with the raw amino-acid sequence, 296 residues long: Glycine N-acyltransferase-like protein (296 aa).

An N6-acetyllysine; alternate modification is found at Lys-41. At Lys-41 the chain carries N6-succinyllysine; alternate. Position 43 is an N6-acetyllysine (Lys-43). Residue Lys-48 is modified to N6-acetyllysine; alternate. Position 48 is an N6-succinyllysine; alternate (Lys-48). N6-acetyllysine occurs at positions 80 and 83. N6-acetyllysine; alternate is present on residues Lys-183 and Lys-256. Lys-183 and Lys-256 each carry N6-succinyllysine; alternate.

Belongs to the glycine N-acyltransferase family.

Its subcellular location is the mitochondrion. The enzyme catalyses an acyl-CoA + glycine = an N-acylglycine + CoA + H(+). Functionally, mitochondrial acyltransferase which transfers the acyl group to the N-terminus of glycine. Can conjugate a multitude of substrates to form a variety of N-acylglycines. This Mus musculus (Mouse) protein is Glycine N-acyltransferase-like protein (Gm4952).